We begin with the raw amino-acid sequence, 635 residues long: Cell pattern formation-associated protein stuA (635 aa).

Disordered regions lie at residues 1 to 21 (MNQT…AQPY) and 63 to 82 (SGVA…MSSQ). The HTH APSES-type domain maps to 129-235 (RVTATLWEDE…HNIGGLLYHP (107 aa)). The H-T-H motif DNA-binding region spans 163–184 (GTKLLNVAGMTRGRRDGILKSE). Disordered regions lie at residues 246 to 480 (QESQ…ASRS) and 498 to 635 (SQLT…PRRR). 2 stretches are compositionally biased toward low complexity: residues 276 to 294 (MQTS…SSQP) and 312 to 325 (SASS…QSSS). The span at 326 to 355 (YDWNNQGMNSGVPNTQPLSIDTTLSNTRSM) shows a compositional bias: polar residues. The segment covering 356–380 (PTTPATTPPGNNLQGMQSYQSQSGY) has biased composition (low complexity). The segment covering 460 to 469 (APEHESEYVQ) has biased composition (basic and acidic residues). Polar residues-rich tracts occupy residues 498–513 (SQLT…QNGS) and 539–571 (AASS…TAPT). The interval 582–605 (KRGREDDDMGRPDSQGDYESKRRR) is nuclear localization domain. Residues 583–592 (RGREDDDMGR) show a composition bias toward basic and acidic residues.

The protein belongs to the EFG1/PHD1/stuA family.

Transcription factor that regulates asexual reproduction. Binds the StuA-response elements (StRE) with the consensus sequence 5'-(A/T)CGCG(T/A)N(A/C)-3' at the promoters of target genes. Controls the expression of 6 secondary metabolite biosynthetic clusters including 2 involved in the synthesis of alkaloids (fumigaclavine and fumitremorgen), 2 clusters of the ETP class (gliotoxin and an unknown ETP-like toxin), a cluster predicted to produce pseurotin A, and the product of the last cluster is unknown. Controls the production of ergot alkaloids during conidiophore development. Controls expression of sspA and gliP. Involved in the induction of immunoglobulin E-independent mast cell degranulation. The chain is Cell pattern formation-associated protein stuA from Aspergillus fumigatus (strain ATCC MYA-4609 / CBS 101355 / FGSC A1100 / Af293) (Neosartorya fumigata).